Here is a 289-residue protein sequence, read N- to C-terminus: Ribosome-inactivating protein alpha-trichosanthin (289 aa).

The first 23 residues, 1–23, serve as a signal peptide directing secretion; the sequence is MIRFLVLSLLILTLFLTTPAVEG. Glu183 is a catalytic residue. A propeptide spans 271-289 (removed in mature form); the sequence is AMDDDVPMTQSFGCGSYAI.

Belongs to the ribosome-inactivating protein family. Type 1 RIP subfamily.

The enzyme catalyses Endohydrolysis of the N-glycosidic bond at one specific adenosine on the 28S rRNA.. Its function is as follows. Inactivates eukaryotic 60S ribosomal subunits. This chain is Ribosome-inactivating protein alpha-trichosanthin, found in Trichosanthes kirilowii (Chinese snake gourd).